The following is a 351-amino-acid chain: N-acetyl-gamma-glutamyl-phosphate reductase (351 aa).

Cysteine 154 is a catalytic residue.

This sequence belongs to the NAGSA dehydrogenase family. Type 1 subfamily.

The protein localises to the cytoplasm. It carries out the reaction N-acetyl-L-glutamate 5-semialdehyde + phosphate + NADP(+) = N-acetyl-L-glutamyl 5-phosphate + NADPH + H(+). Its pathway is amino-acid biosynthesis; L-arginine biosynthesis; N(2)-acetyl-L-ornithine from L-glutamate: step 3/4. Functionally, catalyzes the NADPH-dependent reduction of N-acetyl-5-glutamyl phosphate to yield N-acetyl-L-glutamate 5-semialdehyde. This chain is N-acetyl-gamma-glutamyl-phosphate reductase, found in Prochlorococcus marinus (strain MIT 9215).